Here is a 602-residue protein sequence, read N- to C-terminus: Glutamyl-tRNA(Gln) amidotransferase subunit B, mitochondrial (602 aa).

Residues 1 to 52 (MLQQWLRQSPAAAGLLRCSRYRGPQAALLQLSPQRAPTYHAIRSLQTSAAES) constitute a mitochondrion transit peptide. Residues 61–83 (QLKQGAKGLKAQKRQRRESEEAS) form a disordered region.

The protein belongs to the GatB/GatE family. GatB subfamily. Subunit of the heterotrimeric GatCAB amidotransferase (AdT) complex, composed of A, B and C subunits.

Its subcellular location is the mitochondrion. It catalyses the reaction L-glutamyl-tRNA(Gln) + L-glutamine + ATP + H2O = L-glutaminyl-tRNA(Gln) + L-glutamate + ADP + phosphate + H(+). In terms of biological role, allows the formation of correctly charged Gln-tRNA(Gln) through the transamidation of misacylated Glu-tRNA(Gln) in the mitochondria. The reaction takes place in the presence of glutamine and ATP through an activated gamma-phospho-Glu-tRNA(Gln). In Aspergillus clavatus (strain ATCC 1007 / CBS 513.65 / DSM 816 / NCTC 3887 / NRRL 1 / QM 1276 / 107), this protein is Glutamyl-tRNA(Gln) amidotransferase subunit B, mitochondrial.